The primary structure comprises 419 residues: CinA-like protein (419 aa).

The protein belongs to the CinA family.

The polypeptide is CinA-like protein (Leptospira borgpetersenii serovar Hardjo-bovis (strain JB197)).